Reading from the N-terminus, the 439-residue chain is Methionine aminopeptidase 2-2 (439 aa).

The disordered stretch occupies residues methionine 1 to asparagine 90. Acidic residues predominate over residues glutamate 28–alanine 41. Positions lysine 56 to glycine 72 are enriched in basic residues. Histidine 196 lines the substrate pocket. A divalent metal cation is bound by residues aspartate 216, aspartate 227, and histidine 296. A substrate-binding site is contributed by histidine 304. A divalent metal cation is bound by residues glutamate 329 and glutamate 424.

This sequence belongs to the peptidase M24A family. Methionine aminopeptidase eukaryotic type 2 subfamily. Co(2+) serves as cofactor. It depends on Zn(2+) as a cofactor. Mn(2+) is required as a cofactor. Requires Fe(2+) as cofactor.

It is found in the cytoplasm. The catalysed reaction is Release of N-terminal amino acids, preferentially methionine, from peptides and arylamides.. Its function is as follows. Cotranslationally removes the N-terminal methionine from nascent proteins. The N-terminal methionine is often cleaved when the second residue in the primary sequence is small and uncharged (Met-Ala-, Cys, Gly, Pro, Ser, Thr, or Val). This is Methionine aminopeptidase 2-2 from Penicillium rubens (strain ATCC 28089 / DSM 1075 / NRRL 1951 / Wisconsin 54-1255) (Penicillium chrysogenum).